The following is a 64-amino-acid chain: Large ribosomal subunit protein bL35 (64 aa).

Positions 1 to 45 (MPKMKTHKGAAKRFKKTGKGKIKRRKAFKSHILTKKTPKRKRNLR) are enriched in basic residues. Residues 1 to 64 (MPKMKTHKGA…EEKRIKRLLP (64 aa)) form a disordered region.

The protein belongs to the bacterial ribosomal protein bL35 family.

In Natranaerobius thermophilus (strain ATCC BAA-1301 / DSM 18059 / JW/NM-WN-LF), this protein is Large ribosomal subunit protein bL35.